A 24-amino-acid polypeptide reads, in one-letter code: Lycosin-I (24 aa).

Belongs to the cationic peptide 04 (cupiennin) family. 05 subfamily. As to quaternary structure, monomer in solution. Small size oligomers on the lipid membranes.

The protein localises to the secreted. Its subcellular location is the target cell membrane. Antimicrobial peptide that inhibits many reference strains of bacteria and fungi. Is potent against Candida species and multidrug-resistant Acinetobacter baumannii (MDRAB). Is probably localized in the cytoplasm after being transported through the cell wall and membrane. Is able to interact with cell membranes and enter into cell plasma to activate the mitochondrial death pathway to sensitize cancer cells for apoptosis, as well as up-regulates p27 to inhibit cell proliferation. It shows very low effect on normal cells, such as erythrocytes, Hek293t cells. It also potently inhibits tumor cell growth in vitro, and suppresses various tumor growth in vivo when tested in human cancer xenograft models. It interacts with the cell membrane and is then internalized into the cytoplasm of cancer cells to initiate the programmable cell death. In addition, this peptide has the therapeutic effects of anti-hypertension by endothelium-dependent vasodilatation via the NO/sGC/cGMP signaling pathway. In vivo, this peptide also shows a significant ability to inhibit T.gondii invasion and proliferation, making it a potential alternative agent for the treatment of toxoplasmosis. This is Lycosin-I from Lycosa singoriensis (Wolf spider).